We begin with the raw amino-acid sequence, 448 residues long: UDP-N-acetylmuramoylalanine--D-glutamate ligase (448 aa).

112–118 (GSNAKST) is an ATP binding site.

Belongs to the MurCDEF family.

The protein resides in the cytoplasm. The catalysed reaction is UDP-N-acetyl-alpha-D-muramoyl-L-alanine + D-glutamate + ATP = UDP-N-acetyl-alpha-D-muramoyl-L-alanyl-D-glutamate + ADP + phosphate + H(+). It participates in cell wall biogenesis; peptidoglycan biosynthesis. Its function is as follows. Cell wall formation. Catalyzes the addition of glutamate to the nucleotide precursor UDP-N-acetylmuramoyl-L-alanine (UMA). In Acinetobacter baylyi (strain ATCC 33305 / BD413 / ADP1), this protein is UDP-N-acetylmuramoylalanine--D-glutamate ligase.